A 310-amino-acid chain; its full sequence is N-acetyl-gamma-glutamyl-phosphate reductase (310 aa).

Cys117 is a catalytic residue.

The protein belongs to the NAGSA dehydrogenase family. Type 2 subfamily.

Its subcellular location is the cytoplasm. The catalysed reaction is N-acetyl-L-glutamate 5-semialdehyde + phosphate + NADP(+) = N-acetyl-L-glutamyl 5-phosphate + NADPH + H(+). Its pathway is amino-acid biosynthesis; L-arginine biosynthesis; N(2)-acetyl-L-ornithine from L-glutamate: step 3/4. Its function is as follows. Catalyzes the NADPH-dependent reduction of N-acetyl-5-glutamyl phosphate to yield N-acetyl-L-glutamate 5-semialdehyde. This is N-acetyl-gamma-glutamyl-phosphate reductase from Rhizobium rhizogenes (strain K84 / ATCC BAA-868) (Agrobacterium radiobacter).